Consider the following 529-residue polypeptide: Bifunctional purine biosynthesis protein PurH (529 aa).

Positions 1–148 constitute an MGS-like domain; that stretch reads MQQRRPVRRA…KNHKDVAIVV (148 aa). Lys-287 is modified (N6-acetyllysine).

It belongs to the PurH family.

The enzyme catalyses (6R)-10-formyltetrahydrofolate + 5-amino-1-(5-phospho-beta-D-ribosyl)imidazole-4-carboxamide = 5-formamido-1-(5-phospho-D-ribosyl)imidazole-4-carboxamide + (6S)-5,6,7,8-tetrahydrofolate. The catalysed reaction is IMP + H2O = 5-formamido-1-(5-phospho-D-ribosyl)imidazole-4-carboxamide. It functions in the pathway purine metabolism; IMP biosynthesis via de novo pathway; 5-formamido-1-(5-phospho-D-ribosyl)imidazole-4-carboxamide from 5-amino-1-(5-phospho-D-ribosyl)imidazole-4-carboxamide (10-formyl THF route): step 1/1. It participates in purine metabolism; IMP biosynthesis via de novo pathway; IMP from 5-formamido-1-(5-phospho-D-ribosyl)imidazole-4-carboxamide: step 1/1. The sequence is that of Bifunctional purine biosynthesis protein PurH from Escherichia coli O127:H6 (strain E2348/69 / EPEC).